A 62-amino-acid chain; its full sequence is Large ribosomal subunit protein eL24 (62 aa).

Residues Cys-6, Cys-9, Cys-32, and Cys-36 each coordinate Zn(2+). The C4-type zinc finger occupies 6-36 (CSFCEGTIEPGCGKKYVKKDGSVMHFCSSKC).

The protein belongs to the eukaryotic ribosomal protein eL24 family. In terms of assembly, part of the 50S ribosomal subunit. Forms a cluster with proteins L3 and L14. Zn(2+) serves as cofactor.

Its function is as follows. Binds to the 23S rRNA. The polypeptide is Large ribosomal subunit protein eL24 (Methanococcus maripaludis (strain C5 / ATCC BAA-1333)).